The following is a 56-amino-acid chain: MAVPKKRTSKSKTNLRKTVWKKKALKQAIQAYFIASRASKKLNLEKAITKDLNTES.

Belongs to the bacterial ribosomal protein bL32 family.

The protein localises to the plastid. It is found in the chloroplast. The protein is Large ribosomal subunit protein bL32c of Tupiella akineta (Green alga).